The following is a 427-amino-acid chain: O-methyltransferase FrzF (427 aa).

Residue Asp-281 coordinates S-adenosyl-L-methionine. His-327 acts as the Proton acceptor in catalysis.

The protein belongs to the class I-like SAM-binding methyltransferase superfamily. Cation-independent O-methyltransferase family. As to quaternary structure, homodimer.

The catalysed reaction is (1S,4S)-4-[(4-hydroxyphenyl)methyl]-2,5-diazaspiro[bicyclo[3.2.1]octane-6,1'-cyclohexan]-4'-one + S-adenosyl-L-methionine = (1S,4S)-4-[(4-methoxyphenyl)methyl]-2,5-diazaspiro[bicyclo[3.2.1]octane-6,1'-cyclohexan]-4'-one + S-adenosyl-L-homocysteine + H(+). It carries out the reaction (1S,4S)-4-[(4-hydroxyphenyl)methyl]-2-methyl-2,5-diazaspiro[bicyclo[3.2.1]octane-6,1'-cyclohexan]-4'-one + S-adenosyl-L-methionine = (1S,4S)-4-[(4-methoxyphenyl)methyl]-2-methyl-2,5-diazaspiro[bicyclo[3.2.1]octane-6,1'-cyclohexan]-4'-one + S-adenosyl-L-homocysteine + H(+). Its pathway is secondary metabolite biosynthesis. In terms of biological role, O-methyltransferase; part of the gene cluster that mediates the biosynthesis of the alkaloid (-)-FR901483, a potent immunosuppressant that shows efficacy in animal models and a probable inhibitor of purine nucleotide biosynthesis by targeting phosphoribosylpyrophosphate amidotransferase (PPAT). Within the pathway, FrzF methylates the phenolic oxygen at position C4. The biosynthesis of (-)-FR901483 starts with the condensation of two L-tyrosines to yield (S,S)-dityrosyl-piperazine. This process occurs in 3 steps with the non-canonical nonribosomal peptide synthetase FrzA catalyzing the reduction of L-tyrosine into L-tyrosinal, the spontaneous condensation of 2 L-tyrosinal units, and the subsequent reduction by the NmrA-like family domain-containing oxidoreductase FrzB. The cytochrome P450 monooxygenase FrzC then performs coupling between N10 and C1' to morph the piperazine into a 1,4-diazabicyclo[3.2.1]octane spiro-fused to a 2,5-cyclohexadienone. The dienone portion is further reduced to cyclohexanone by the flavin-dependent reductase FrzD. The methyltranserases (MTs) FrzE and FrzF are then involved in the methylation at the C10' amine and the C4 phenolic oxygen, respectively. The order of the two MTs appear to be interchangeable. Cleavage of the C9-N10' bond by the dioxygenase FrzG then leads to formation of a conjugated iminium. In addition to the oxidation of C9, an additional dehydrogenation between C7 and C8 can occur to give a likely shunt product. The next biosynthetic step is the intramolecular aldol condensation catalyzed by the newly identified aldolase FrzH to yield an aza-tricyclic product with the formation of a C9-C3' bond. The short-chain dehydrogenase/reductase FrzI then produces dephospho-(-)-FR901483 that is phosphorylated at C4'-OH into (-)-FR901483 by the phosphotransferase FrzJ. The sequence is that of O-methyltransferase FrzF from Cladobotryum sp.